The following is a 411-amino-acid chain: Acetate kinase (411 aa).

Asparagine 7 lines the Mg(2+) pocket. Residue lysine 14 participates in ATP binding. Position 94 (arginine 94) interacts with substrate. Aspartate 151 functions as the Proton donor/acceptor in the catalytic mechanism. ATP is bound by residues 211-215, 285-287, and 333-337; these read HLGNG, DMR, and GIGEN. Glutamate 387 serves as a coordination point for Mg(2+).

It belongs to the acetokinase family. As to quaternary structure, homodimer. Mg(2+) serves as cofactor. The cofactor is Mn(2+).

The protein localises to the cytoplasm. The enzyme catalyses acetate + ATP = acetyl phosphate + ADP. The protein operates within metabolic intermediate biosynthesis; acetyl-CoA biosynthesis; acetyl-CoA from acetate: step 1/2. Catalyzes the formation of acetyl phosphate from acetate and ATP. Can also catalyze the reverse reaction. This chain is Acetate kinase, found in Syntrophobacter fumaroxidans (strain DSM 10017 / MPOB).